Here is a 507-residue protein sequence, read N- to C-terminus: Chromosomal replication initiator protein DnaA (507 aa).

The segment at 1-112 (MTDDPGSGFT…PATDEADDTT (112 aa)) is domain I, interacts with DnaA modulators. The disordered stretch occupies residues 99 to 162 (RIAPPATDEA…ERPRNTDSAT (64 aa)). The span at 113–127 (VPPSENPATTSPDTT) shows a compositional bias: polar residues. The interval 113–166 (VPPSENPATTSPDTTTDNDEIDDSAAARGDNQHSWPSYFTERPRNTDSATAGVT) is domain II. Residues 167–383 (SLNRRYTFDT…GALIRVTAFA (217 aa)) form a domain III, AAA+ region region. Positions 211, 213, 214, and 215 each coordinate ATP. The segment at 384 to 507 (SLNKTPIDKA…TTRIRQRSKR (124 aa)) is domain IV, binds dsDNA.

This sequence belongs to the DnaA family. In terms of assembly, oligomerizes as a right-handed, spiral filament on DNA at oriC.

The protein resides in the cytoplasm. Plays an essential role in the initiation and regulation of chromosomal replication. ATP-DnaA binds to the origin of replication (oriC) to initiate formation of the DNA replication initiation complex once per cell cycle. Binds the DnaA box (a 9 base pair repeat at the origin) and separates the double-stranded (ds)DNA. Forms a right-handed helical filament on oriC DNA; dsDNA binds to the exterior of the filament while single-stranded (ss)DNA is stabiized in the filament's interior. The ATP-DnaA-oriC complex binds and stabilizes one strand of the AT-rich DNA unwinding element (DUE), permitting loading of DNA polymerase. After initiation quickly degrades to an ADP-DnaA complex that is not apt for DNA replication. Binds acidic phospholipids. This Mycobacterium bovis (strain BCG / Tokyo 172 / ATCC 35737 / TMC 1019) protein is Chromosomal replication initiator protein DnaA.